We begin with the raw amino-acid sequence, 593 residues long: Pyruvate decarboxylase 1 (593 aa).

Over residues 1–19 (METETETPNGSTPCPTSAP) the composition is skewed to polar residues. Positions 1–20 (METETETPNGSTPCPTSAPS) are disordered. Residues aspartate 55 and histidine 142 each coordinate substrate. The segment at 420-502 (DSWFNCQKLR…FLINNGGYTI (83 aa)) is thiamine pyrophosphate binding. Aspartate 470, asparagine 497, and glycine 499 together coordinate Mg(2+). Position 503 (glutamate 503) interacts with substrate.

This sequence belongs to the TPP enzyme family. In terms of assembly, homotetramer. It depends on a metal cation as a cofactor. Thiamine diphosphate serves as cofactor.

It catalyses the reaction a 2-oxocarboxylate + H(+) = an aldehyde + CO2. The protein is Pyruvate decarboxylase 1 (PDC1) of Pisum sativum (Garden pea).